Consider the following 317-residue polypeptide: Beta-ketoacyl-[acyl-carrier-protein] synthase III (317 aa).

Active-site residues include C112 and H244. An ACP-binding region spans residues 245-249; the sequence is QANLR. Residue N274 is part of the active site.

Belongs to the thiolase-like superfamily. FabH family. In terms of assembly, homodimer.

The protein localises to the cytoplasm. It catalyses the reaction malonyl-[ACP] + acetyl-CoA + H(+) = 3-oxobutanoyl-[ACP] + CO2 + CoA. It functions in the pathway lipid metabolism; fatty acid biosynthesis. Functionally, catalyzes the condensation reaction of fatty acid synthesis by the addition to an acyl acceptor of two carbons from malonyl-ACP. Catalyzes the first condensation reaction which initiates fatty acid synthesis and may therefore play a role in governing the total rate of fatty acid production. Possesses both acetoacetyl-ACP synthase and acetyl transacylase activities. Its substrate specificity determines the biosynthesis of branched-chain and/or straight-chain of fatty acids. The chain is Beta-ketoacyl-[acyl-carrier-protein] synthase III from Shigella boydii serotype 4 (strain Sb227).